Consider the following 227-residue polypeptide: Enolase-phosphatase E1 (227 aa).

It belongs to the HAD-like hydrolase superfamily. MasA/MtnC family. As to quaternary structure, monomer. Mg(2+) is required as a cofactor.

The catalysed reaction is 5-methylsulfanyl-2,3-dioxopentyl phosphate + H2O = 1,2-dihydroxy-5-(methylsulfanyl)pent-1-en-3-one + phosphate. It functions in the pathway amino-acid biosynthesis; L-methionine biosynthesis via salvage pathway; L-methionine from S-methyl-5-thio-alpha-D-ribose 1-phosphate: step 3/6. It participates in amino-acid biosynthesis; L-methionine biosynthesis via salvage pathway; L-methionine from S-methyl-5-thio-alpha-D-ribose 1-phosphate: step 4/6. Its function is as follows. Bifunctional enzyme that catalyzes the enolization of 2,3-diketo-5-methylthiopentyl-1-phosphate (DK-MTP-1-P) into the intermediate 2-hydroxy-3-keto-5-methylthiopentenyl-1-phosphate (HK-MTPenyl-1-P), which is then dephosphorylated to form the acireductone 1,2-dihydroxy-3-keto-5-methylthiopentene (DHK-MTPene). In Pseudomonas savastanoi pv. phaseolicola (strain 1448A / Race 6) (Pseudomonas syringae pv. phaseolicola (strain 1448A / Race 6)), this protein is Enolase-phosphatase E1.